We begin with the raw amino-acid sequence, 554 residues long: Urocanate hydratase (554 aa).

NAD(+) is bound by residues 51–52 (GG), glutamine 129, 175–177 (GMG), glutamate 195, 241–242 (NA), 262–266 (QTSAH), 272–273 (YL), and tyrosine 321. The active site involves cysteine 409. Glycine 491 serves as a coordination point for NAD(+).

This sequence belongs to the urocanase family. It depends on NAD(+) as a cofactor.

It is found in the cytoplasm. It carries out the reaction 4-imidazolone-5-propanoate = trans-urocanate + H2O. It participates in amino-acid degradation; L-histidine degradation into L-glutamate; N-formimidoyl-L-glutamate from L-histidine: step 2/3. In terms of biological role, catalyzes the conversion of urocanate to 4-imidazolone-5-propionate. This chain is Urocanate hydratase, found in Methylobacterium nodulans (strain LMG 21967 / CNCM I-2342 / ORS 2060).